The primary structure comprises 100 residues: Putative insulin-like peptide beta-type 6 (100 aa).

An N-terminal signal peptide occupies residues 1–18 (MHSIVALMLIGTILPIAA). 4 disulfide bridges follow: Cys54–Cys83, Cys66–Cys96, Cys70–Cys97, and Cys82–Cys87.

Belongs to the insulin family.

The protein localises to the secreted. This Caenorhabditis elegans protein is Putative insulin-like peptide beta-type 6 (ins-5).